A 195-amino-acid polypeptide reads, in one-letter code: Segregation and condensation protein B (195 aa).

This sequence belongs to the ScpB family. Homodimer. Homodimerization may be required to stabilize the binding of ScpA to the Smc head domains. Component of a cohesin-like complex composed of ScpA, ScpB and the Smc homodimer, in which ScpA and ScpB bind to the head domain of Smc. The presence of the three proteins is required for the association of the complex with DNA.

The protein resides in the cytoplasm. Participates in chromosomal partition during cell division. May act via the formation of a condensin-like complex containing Smc and ScpA that pull DNA away from mid-cell into both cell halves. This is Segregation and condensation protein B from Clostridium perfringens (strain SM101 / Type A).